The following is a 644-amino-acid chain: Chaperone protein HtpG (644 aa).

Positions 1–352 are a; substrate-binding; that stretch reads MNARVEQLEF…AQDMSLNVSR (352 aa). Positions 353–566 are b; sequence EILQQDRQIK…AFGITPALAR (214 aa). A c region spans residues 567 to 644; the sequence is LYRASGQDIP…ILADRLARTL (78 aa).

The protein belongs to the heat shock protein 90 family. In terms of assembly, homodimer.

It localises to the cytoplasm. In terms of biological role, molecular chaperone. Has ATPase activity. This Mycobacterium avium (strain 104) protein is Chaperone protein HtpG.